Here is a 540-residue protein sequence, read N- to C-terminus: Chaperonin GroEL 2 (540 aa).

Residues 30–33 (TLGP), Lys-51, 87–91 (DGTTT), Gly-415, 480–482 (NAL), and Asp-496 each bind ATP.

It belongs to the chaperonin (HSP60) family. In terms of assembly, forms a cylinder of 14 subunits composed of two heptameric rings stacked back-to-back. Interacts with the co-chaperonin GroES.

Its subcellular location is the cytoplasm. It catalyses the reaction ATP + H2O + a folded polypeptide = ADP + phosphate + an unfolded polypeptide.. Functionally, together with its co-chaperonin GroES, plays an essential role in assisting protein folding. The GroEL-GroES system forms a nano-cage that allows encapsulation of the non-native substrate proteins and provides a physical environment optimized to promote and accelerate protein folding. This chain is Chaperonin GroEL 2, found in Protochlamydia amoebophila (strain UWE25).